We begin with the raw amino-acid sequence, 133 residues long: Ribosome-binding factor A (133 aa).

The protein belongs to the RbfA family. In terms of assembly, monomer. Binds 30S ribosomal subunits, but not 50S ribosomal subunits or 70S ribosomes.

Its subcellular location is the cytoplasm. Its function is as follows. One of several proteins that assist in the late maturation steps of the functional core of the 30S ribosomal subunit. Associates with free 30S ribosomal subunits (but not with 30S subunits that are part of 70S ribosomes or polysomes). Required for efficient processing of 16S rRNA. May interact with the 5'-terminal helix region of 16S rRNA. This is Ribosome-binding factor A from Cronobacter sakazakii (strain ATCC BAA-894) (Enterobacter sakazakii).